A 389-amino-acid polypeptide reads, in one-letter code: Protein IQ-domain 26 (389 aa).

IQ domains are found at residues 106-134 (ERWA…GLVK) and 135-157 (LQAL…SMQA). Residues 137–151 (ALVRGYLVRKRAAET) form a calmodulin-binding region. A disordered region spans residues 347–374 (SVSGVRMVQPQPQPQTQTQQQKRSPCSY).

This sequence belongs to the IQD family. As to quaternary structure, binds to multiple calmodulin (CaM) in the presence of Ca(2+) and CaM-like proteins.

It is found in the cell membrane. It localises to the cytoplasm. The protein resides in the cytoskeleton. Its function is as follows. May be involved in cooperative interactions with calmodulins or calmodulin-like proteins. Recruits calmodulin proteins to microtubules, thus being a potential scaffold in cellular signaling and trafficking. May associate with nucleic acids and regulate gene expression at the transcriptional or post-transcriptional level. This chain is Protein IQ-domain 26, found in Arabidopsis thaliana (Mouse-ear cress).